The chain runs to 486 residues: Glutamyl-tRNA(Gln) amidotransferase subunit A (486 aa).

Residues Lys79 and Ser154 each act as charge relay system in the active site. The active-site Acyl-ester intermediate is the Ser178.

The protein belongs to the amidase family. GatA subfamily. In terms of assembly, heterotrimer of A, B and C subunits.

The enzyme catalyses L-glutamyl-tRNA(Gln) + L-glutamine + ATP + H2O = L-glutaminyl-tRNA(Gln) + L-glutamate + ADP + phosphate + H(+). In terms of biological role, allows the formation of correctly charged Gln-tRNA(Gln) through the transamidation of misacylated Glu-tRNA(Gln) in organisms which lack glutaminyl-tRNA synthetase. The reaction takes place in the presence of glutamine and ATP through an activated gamma-phospho-Glu-tRNA(Gln). This chain is Glutamyl-tRNA(Gln) amidotransferase subunit A, found in Myxococcus xanthus (strain DK1622).